The following is a 257-amino-acid chain: DNA repair protein RecO (257 aa).

The protein belongs to the RecO family.

Involved in DNA repair and RecF pathway recombination. In Synechococcus sp. (strain CC9605), this protein is DNA repair protein RecO.